Reading from the N-terminus, the 103-residue chain is Pyrimidine/purine nucleoside phosphorylase (103 aa).

The protein belongs to the nucleoside phosphorylase PpnP family.

The enzyme catalyses a purine D-ribonucleoside + phosphate = a purine nucleobase + alpha-D-ribose 1-phosphate. It catalyses the reaction adenosine + phosphate = alpha-D-ribose 1-phosphate + adenine. The catalysed reaction is cytidine + phosphate = cytosine + alpha-D-ribose 1-phosphate. It carries out the reaction guanosine + phosphate = alpha-D-ribose 1-phosphate + guanine. The enzyme catalyses inosine + phosphate = alpha-D-ribose 1-phosphate + hypoxanthine. It catalyses the reaction thymidine + phosphate = 2-deoxy-alpha-D-ribose 1-phosphate + thymine. The catalysed reaction is uridine + phosphate = alpha-D-ribose 1-phosphate + uracil. It carries out the reaction xanthosine + phosphate = alpha-D-ribose 1-phosphate + xanthine. Catalyzes the phosphorolysis of diverse nucleosides, yielding D-ribose 1-phosphate and the respective free bases. Can use uridine, adenosine, guanosine, cytidine, thymidine, inosine and xanthosine as substrates. Also catalyzes the reverse reactions. The sequence is that of Pyrimidine/purine nucleoside phosphorylase from Shewanella oneidensis (strain ATCC 700550 / JCM 31522 / CIP 106686 / LMG 19005 / NCIMB 14063 / MR-1).